Here is a 412-residue protein sequence, read N- to C-terminus: Histidine--tRNA ligase (412 aa).

The protein belongs to the class-II aminoacyl-tRNA synthetase family. Homodimer.

Its subcellular location is the cytoplasm. It catalyses the reaction tRNA(His) + L-histidine + ATP = L-histidyl-tRNA(His) + AMP + diphosphate + H(+). The sequence is that of Histidine--tRNA ligase from Rickettsia typhi (strain ATCC VR-144 / Wilmington).